Consider the following 181-residue polypeptide: ADP-ribosylation factor 1 (181 aa).

Glycine 2 carries the post-translational modification N-acetylglycine; alternate. Glycine 2 carries the N-myristoyl glycine; alternate lipid modification. Residues 3–16 (NIFANLFKGLFGKK) form an important for the stable binding to the membranes region. GTP-binding positions include 24–32 (GLDAAGKTT), 126–129 (NKQD), and alanine 160.

It belongs to the small GTPase superfamily. Arf family. As to quaternary structure, interacts (when activated) with GGA1, GGA2 and GGA3; the interaction is required for proper subcellular location of GGA1, GGA2 and GGA3. Interacts with ARHGAP21, ASAP2, GGA1, HERC1, PRKCABP, PIP5K1B, TMED2, PSCD2, TMED10 and GRIA2. Interacts with ARFGAP1, which hydrolyzes GTP and thus, regulates its function. Interacts with PI4KB in the Golgi complex. Interacts with NCS1/FREQ in the Golgi and at the plasma membrane. Interacts with PLEKHA3. Interacts with PLEKHA8; the interaction, together with phosphatidylinositol 4-phosphate binding, is required for FAPP2-mediated glucosylceramide transfer activity. Interacts (activated) with PICK1 (via PDZ domain); the interaction blocks Arp2/3 complex inhibition. Interacts with IQSEC1. Interacts with C9orf72.

The protein localises to the golgi apparatus membrane. It is found in the synapse. It localises to the synaptosome. The protein resides in the postsynaptic density. It catalyses the reaction GTP + H2O = GDP + phosphate + H(+). Its activity is regulated as follows. Alternates between an inactive GDP-bound form and an active GTP-bound form. Activated by guanine nucleotide-exchange factors (GEFs) and inactivated by GTPase-activating proteins (GAPs). Its function is as follows. Small GTPase involved in protein trafficking between different compartments. Modulates vesicle budding and uncoating within the Golgi complex. In its GTP-bound form, triggers the recruitment of coatomer proteins to the Golgi membrane. The hydrolysis of ARF1-bound GTP, which is mediated by ARFGAPs proteins, is required for dissociation of coat proteins from Golgi membranes and vesicles. The GTP-bound form interacts with PICK1 to limit PICK1-mediated inhibition of Arp2/3 complex activity; the function is linked to AMPA receptor (AMPAR) trafficking, regulation of synaptic plasticity of excitatory synapses and spine shrinkage during long-term depression (LTD). Plays a key role in the regulation of intestinal stem cells and gut microbiota, and is essential for maintaining intestinal homeostasis. Also plays a critical role in mast cell expansion but not in mast cell maturation by facilitating optimal mTORC1 activation. This chain is ADP-ribosylation factor 1 (ARF1), found in Bos taurus (Bovine).